Here is a 61-residue protein sequence, read N- to C-terminus: Small ribosomal subunit protein uS14 (61 aa).

Positions 24, 27, 40, and 43 each coordinate Zn(2+).

This sequence belongs to the universal ribosomal protein uS14 family. Zinc-binding uS14 subfamily. In terms of assembly, part of the 30S ribosomal subunit. Contacts proteins S3 and S10. Zn(2+) serves as cofactor.

Binds 16S rRNA, required for the assembly of 30S particles and may also be responsible for determining the conformation of the 16S rRNA at the A site. This Mycoplasma mobile (strain ATCC 43663 / 163K / NCTC 11711) (Mesomycoplasma mobile) protein is Small ribosomal subunit protein uS14.